The chain runs to 66 residues: Cold shock protein CspC (66 aa).

Residues 4–63 enclose the CSD domain; that stretch reads GTVKWFNAEKGFGFIERENGDDVFVHFSAIQSDGFKSLDEGQKVSFDVEQGARGAQAANV.

It is found in the cytoplasm. The chain is Cold shock protein CspC (cspC) from Bacillus subtilis (strain 168).